A 147-amino-acid polypeptide reads, in one-letter code: Small ribosomal subunit protein uS5 (147 aa).

Residues 9–72 (FEEVIVDIGR…DDAFKNIVEV (64 aa)) form the S5 DRBM domain.

Belongs to the universal ribosomal protein uS5 family. Part of the 30S ribosomal subunit. Contacts proteins S4 and S8.

Functionally, with S4 and S12 plays an important role in translational accuracy. Located at the back of the 30S subunit body where it stabilizes the conformation of the head with respect to the body. The sequence is that of Small ribosomal subunit protein uS5 from Campylobacter fetus subsp. fetus (strain 82-40).